A 617-amino-acid polypeptide reads, in one-letter code: Secretogranin-2 (617 aa).

An N-terminal signal peptide occupies residues M1 to A27. Residues A28 to F30 constitute a propeptide that is removed on maturation. Positions N123–M147 are disordered. Y151 is subject to Sulfotyrosine. Residues S174, S268, S432, S532, S555, and S556 each carry the phosphoserine modification. The segment at N552 to Q583 is disordered.

Belongs to the chromogranin/secretogranin protein family. As to quaternary structure, interacts with Secretogranin III/SCG3.

It is found in the secreted. In terms of biological role, neuroendocrine protein of the granin family that regulates the biogenesis of secretory granules. The sequence is that of Secretogranin-2 (SCG2) from Macaca fascicularis (Crab-eating macaque).